Here is a 631-residue protein sequence, read N- to C-terminus: Leucine aminopeptidase 2-2 (631 aa).

Substrate-binding positions include 140–142 (QCQ) and 265–270 (PYGGME). Residue histidine 294 participates in Zn(2+) binding. Glutamate 295 acts as the Proton acceptor in catalysis. Zn(2+) is bound by residues histidine 298 and glutamate 317. Tyrosine 395 acts as the Proton donor in catalysis.

Belongs to the peptidase M1 family. The cofactor is Zn(2+).

The protein resides in the cytoplasm. It is found in the nucleus. The catalysed reaction is an epoxide + H2O = an ethanediol. Functionally, aminopeptidase that preferentially cleaves di- and tripeptides. Also has low epoxide hydrolase activity (in vitro). Can hydrolyze the epoxide leukotriene LTA(4) but it forms preferentially 5,6-dihydroxy-7,9,11,14-eicosatetraenoic acid rather than the cytokine leukotriene B(4) as the product compared to the homologous mammalian enzyme (in vitro). This is Leucine aminopeptidase 2-2 from Meyerozyma guilliermondii (strain ATCC 6260 / CBS 566 / DSM 6381 / JCM 1539 / NBRC 10279 / NRRL Y-324) (Yeast).